A 350-amino-acid polypeptide reads, in one-letter code: Probable dual-specificity RNA methyltransferase RlmN (350 aa).

The Proton acceptor role is filled by E98. Residues 104–334 enclose the Radical SAM core domain; that stretch reads HTYGNSVCVS…VTVRRELGGD (231 aa). C111 and C339 form a disulfide bridge. [4Fe-4S] cluster-binding residues include C118, C122, and C125. Residues 165-166, S197, 220-222, and N296 each bind S-adenosyl-L-methionine; these read GE and SLH. The active-site S-methylcysteine intermediate is C339.

The protein belongs to the radical SAM superfamily. RlmN family. The cofactor is [4Fe-4S] cluster.

Its subcellular location is the cytoplasm. The catalysed reaction is adenosine(2503) in 23S rRNA + 2 reduced [2Fe-2S]-[ferredoxin] + 2 S-adenosyl-L-methionine = 2-methyladenosine(2503) in 23S rRNA + 5'-deoxyadenosine + L-methionine + 2 oxidized [2Fe-2S]-[ferredoxin] + S-adenosyl-L-homocysteine. It catalyses the reaction adenosine(37) in tRNA + 2 reduced [2Fe-2S]-[ferredoxin] + 2 S-adenosyl-L-methionine = 2-methyladenosine(37) in tRNA + 5'-deoxyadenosine + L-methionine + 2 oxidized [2Fe-2S]-[ferredoxin] + S-adenosyl-L-homocysteine. Functionally, specifically methylates position 2 of adenine 2503 in 23S rRNA and position 2 of adenine 37 in tRNAs. This chain is Probable dual-specificity RNA methyltransferase RlmN, found in Desulforamulus reducens (strain ATCC BAA-1160 / DSM 100696 / MI-1) (Desulfotomaculum reducens).